The primary structure comprises 313 residues: Ribonuclease HIII (313 aa).

Residues alanine 62–glutamine 88 are disordered. An RNase H type-2 domain is found at methionine 96–lysine 312. Positions 102, 103, and 207 each coordinate a divalent metal cation.

Belongs to the RNase HII family. RnhC subfamily. It depends on Mn(2+) as a cofactor. Mg(2+) serves as cofactor.

The protein localises to the cytoplasm. It catalyses the reaction Endonucleolytic cleavage to 5'-phosphomonoester.. Its function is as follows. Endonuclease that specifically degrades the RNA of RNA-DNA hybrids. The sequence is that of Ribonuclease HIII from Bacillus licheniformis (strain ATCC 14580 / DSM 13 / JCM 2505 / CCUG 7422 / NBRC 12200 / NCIMB 9375 / NCTC 10341 / NRRL NRS-1264 / Gibson 46).